Consider the following 215-residue polypeptide: Cytochrome b6 (215 aa).

The chain crosses the membrane as a helical span at residues 32 to 52 (IFYCLGGITLTCFLVQVATGF). A heme c-binding site is contributed by cysteine 35. The heme b site is built by histidine 86 and histidine 100. The next 3 membrane-spanning stretches (helical) occupy residues 90–110 (ASMMVLMMILHVFRVYLTGGF), 116–136 (LTWVTGVVLAVLTASFGVTGY), and 186–206 (LHTFVLPLLTAVFMLMHFPMI). Heme b-binding residues include histidine 187 and histidine 202.

It belongs to the cytochrome b family. PetB subfamily. In terms of assembly, the 4 large subunits of the cytochrome b6-f complex are cytochrome b6, subunit IV (17 kDa polypeptide, PetD), cytochrome f and the Rieske protein, while the 4 small subunits are PetG, PetL, PetM and PetN. The complex functions as a dimer. Requires heme b as cofactor. Heme c serves as cofactor.

Its subcellular location is the plastid. It localises to the chloroplast thylakoid membrane. Its function is as follows. Component of the cytochrome b6-f complex, which mediates electron transfer between photosystem II (PSII) and photosystem I (PSI), cyclic electron flow around PSI, and state transitions. In Daucus carota (Wild carrot), this protein is Cytochrome b6.